A 237-amino-acid chain; its full sequence is UPF0174 protein YaaW (237 aa).

It belongs to the UPF0174 family.

This chain is UPF0174 protein YaaW, found in Escherichia coli O157:H7.